A 459-amino-acid chain; its full sequence is Cysteine--tRNA ligase (459 aa).

Cysteine 31 is a binding site for Zn(2+). The short motif at 33–43 (PTVYYNPHIGN) is the 'HIGH' region element. Residues cysteine 216, histidine 241, and glutamate 245 each coordinate Zn(2+). The 'KMSKS' region signature appears at 274-278 (KMSKS). Lysine 277 is a binding site for ATP.

The protein belongs to the class-I aminoacyl-tRNA synthetase family. In terms of assembly, monomer. Zn(2+) serves as cofactor.

Its subcellular location is the cytoplasm. The enzyme catalyses tRNA(Cys) + L-cysteine + ATP = L-cysteinyl-tRNA(Cys) + AMP + diphosphate. This Rickettsia peacockii (strain Rustic) protein is Cysteine--tRNA ligase.